The sequence spans 195 residues: uncharacterized protein (195 aa).

An HTH tetR-type domain is found at glutamate 10–glutamine 70. The segment at residues serine 33–phenylalanine 52 is a DNA-binding region (H-T-H motif).

This is an uncharacterized protein from Mycobacterium tuberculosis (strain CDC 1551 / Oshkosh).